A 372-amino-acid polypeptide reads, in one-letter code: NADH-quinone oxidoreductase subunit D (372 aa).

This sequence belongs to the complex I 49 kDa subunit family. As to quaternary structure, NDH-1 is composed of 14 different subunits. Subunits NuoB, C, D, E, F, and G constitute the peripheral sector of the complex.

The protein localises to the cell inner membrane. It catalyses the reaction a quinone + NADH + 5 H(+)(in) = a quinol + NAD(+) + 4 H(+)(out). Its function is as follows. NDH-1 shuttles electrons from NADH, via FMN and iron-sulfur (Fe-S) centers, to quinones in the respiratory chain. The immediate electron acceptor for the enzyme in this species is believed to be ubiquinone. Couples the redox reaction to proton translocation (for every two electrons transferred, four hydrogen ions are translocated across the cytoplasmic membrane), and thus conserves the redox energy in a proton gradient. In Desulfotalea psychrophila (strain LSv54 / DSM 12343), this protein is NADH-quinone oxidoreductase subunit D.